Reading from the N-terminus, the 76-residue chain is Omega-conotoxin-like TxO1 (76 aa).

Positions 1–22 (MKLTCVVIVAVLFLTVWTFATA) are cleaved as a signal peptide. A propeptide spanning residues 23–50 (DDSGNGLEKLFSNAHHEMKNPEASKLNE) is cleaved from the precursor. Intrachain disulfides connect C52–C67, C59–C70, and C66–C75.

It belongs to the conotoxin O1 superfamily. In terms of tissue distribution, expressed by the venom duct.

It is found in the secreted. In terms of biological role, omega-conotoxins act at presynaptic membranes, they bind and block voltage-gated calcium channels (Cav). The polypeptide is Omega-conotoxin-like TxO1 (Conus textile (Cloth-of-gold cone)).